A 300-amino-acid polypeptide reads, in one-letter code: ATP-dependent (S)-NAD(P)H-hydrate dehydratase (300 aa).

Positions 14–293 constitute a YjeF C-terminal domain; that stretch reads LLTLFKTIVP…NEISAVFRSD (280 aa). (6S)-NADPHX is bound by residues Gly114 and 167-173; that span reads NAMEFRR. Residues 198–202 and 219–228 each bind ATP; these read KGVND and GSGRRCGGQG. A (6S)-NADPHX-binding site is contributed by Asp229.

The protein belongs to the NnrD/CARKD family. Mg(2+) serves as cofactor.

The enzyme catalyses (6S)-NADHX + ATP = ADP + phosphate + NADH + H(+). The catalysed reaction is (6S)-NADPHX + ATP = ADP + phosphate + NADPH + H(+). Functionally, catalyzes the dehydration of the S-form of NAD(P)HX at the expense of ATP, which is converted to ADP. Together with NAD(P)HX epimerase, which catalyzes the epimerization of the S- and R-forms, the enzyme allows the repair of both epimers of NAD(P)HX, a damaged form of NAD(P)H that is a result of enzymatic or heat-dependent hydration. This chain is ATP-dependent (S)-NAD(P)H-hydrate dehydratase, found in Drosophila pseudoobscura pseudoobscura (Fruit fly).